A 1121-amino-acid polypeptide reads, in one-letter code: Anillin (1121 aa).

Position 1 is an N-acetylmethionine (M1). The span at 1-25 shows a compositional bias: basic and acidic residues; sequence MDPFTEKLLERTRARRENLQRKMAE. The required for ubiquitination stretch occupies residues 1–45; the sequence is MDPFTEKLLERTRARRENLQRKMAERPTAVARSAPHAKRGREPLS. 3 disordered regions span residues 1–113, 125–196, and 212–402; these read MDPF…AAIS, ADRG…PVGR, and DDVS…TKAI. Residues 1 to 154 are interaction with CD2AP; that stretch reads MDPFTEKLLE…MQRLAEQRRH (154 aa). The segment at 1–228 is nuclear localization; sequence MDPFTEKLLE…AKQNSVQEQP (228 aa). Residues S73 and S96 each carry the phosphoserine modification. Residues 96 to 109 are compositionally biased toward pro residues; sequence SPMPAPRQAKPPAP. A compositionally biased stretch (polar residues) spans 130–143; that stretch reads NSGSEASATSSVKT. Over residues 147-157 the composition is skewed to basic and acidic residues; the sequence is RLAEQRRHWDS. At S180 the chain carries Phosphoserine. T192 bears the Phosphothreonine mark. Residues 216 to 228 show a composition bias toward polar residues; it reads HSSAKQNSVQEQP. Phosphoserine occurs at positions 223, 250, and 259. Residues 229–671 are interaction with F-actin; the sequence is GTACLSKSSS…RDLLYSIDAY (443 aa). Residues 234–250 are compositionally biased toward low complexity; it reads SKSSSASGASASINSSS. A compositionally biased stretch (low complexity) spans 282–298; that stretch reads SASVSSSVKASSPVTAA. Residues 303–314 are compositionally biased toward basic and acidic residues; the sequence is ENREAQNPELLH. T316 is modified (phosphothreonine). 2 positions are modified to phosphoserine: S318 and S334. At T359 the chain carries Phosphothreonine. At K366 the chain carries N6-acetyllysine. Basic and acidic residues predominate over residues 368–384; sequence FLERFGERCQEHSKESP. Positions 391–401 are enriched in polar residues; sequence KTPNITPNTKA. A phosphothreonine mark is found at T392 and T396. Residues S414 and S444 each carry the phosphoserine modification. A disordered region spans residues 490 to 511; the sequence is NEPAVKLSSTEPAGSTESEMTK. Over residues 496 to 511 the composition is skewed to polar residues; sequence LSSTEPAGSTESEMTK. Phosphoserine occurs at positions 513, 548, and 556. Positions 564–599 form a coiled coil; that stretch reads FSDVLEEGELDVEKSQEEMDQVGAENSEEQEDALNI. Over residues 623-635 the composition is skewed to polar residues; that stretch reads SPPSELRDSNLSA. The disordered stretch occupies residues 623-656; that stretch reads SPPSELRDSNLSAASPKPGKFQRTRVPRAESADS. A phosphoserine mark is found at S637, S653, S656, and S659. Y666 carries the phosphotyrosine modification. 4 positions are modified to phosphoserine: S673, S683, S787, and S924. A localization to the cleavage furrow region spans residues 725-1121; that stretch reads QQTVIYQASQ…DACYKPVGKP (397 aa). Positions 980–1104 constitute a PH domain; sequence AVEEKGFLTI…WMQKLNQVIV (125 aa).

In terms of assembly, interacts with F-actin. Interacts with CD2AP. May interact with RHOA. Interacts with FZR1/CDH1 during mitotic exit. Post-translationally, phosphorylated during mitosis. In terms of processing, ubiquitinated, and this requires FZR1/CDH1.

The protein resides in the nucleus. The protein localises to the cytoplasm. It localises to the cytoskeleton. Its subcellular location is the cell cortex. It is found in the cell projection. The protein resides in the bleb. Required for cytokinesis. Essential for the structural integrity of the cleavage furrow and for completion of cleavage furrow ingression. Plays a role in bleb assembly during metaphase and anaphase of mitosis. May play a significant role in podocyte cell migration. This chain is Anillin (Anln), found in Mus musculus (Mouse).